We begin with the raw amino-acid sequence, 317 residues long: MPVRLVFAGTPEPALPALRRLLDSPRHEVIAVLTRPDAASGRRGKPEPSPVAREALDRGIPVLRPARPNSPEFVAELAQLAPDCCAVVAYGALLRDELLAVPPHGWINLHFSLLPAWRGAAPVQAAIAAGDTITGATTFRIEPALDSGPIYGVVTEAIRPTDTAGELLARLAVSGAELLSATLDGIADSTLTPRPQPAEGVSIAPKITVEQARVRWDLPAPVVERRIRAVTPNPGAWTVIGDLRIKLGPVRLGAASDLPAPPEPLPPGAIHVDRKSVWVGTASDPVRLDQIQPPGKKFMNAVDWARGARLDPAARAT.

Position 112 to 115 (112 to 115) interacts with (6S)-5,6,7,8-tetrahydrofolate; that stretch reads SLLP.

The protein belongs to the Fmt family.

The catalysed reaction is L-methionyl-tRNA(fMet) + (6R)-10-formyltetrahydrofolate = N-formyl-L-methionyl-tRNA(fMet) + (6S)-5,6,7,8-tetrahydrofolate + H(+). Its function is as follows. Attaches a formyl group to the free amino group of methionyl-tRNA(fMet). The formyl group appears to play a dual role in the initiator identity of N-formylmethionyl-tRNA by promoting its recognition by IF2 and preventing the misappropriation of this tRNA by the elongation apparatus. The chain is Methionyl-tRNA formyltransferase from Mycobacterium avium (strain 104).